The primary structure comprises 362 residues: tRNA-specific 2-thiouridylase MnmA (362 aa).

Residues 13–20 (GLSGGVDS) and methionine 39 each bind ATP. The interaction with target base in tRNA stretch occupies residues 99–101 (NPD). The Nucleophile role is filled by cysteine 104. A disulfide bridge connects residues cysteine 104 and cysteine 200. Glycine 128 lines the ATP pocket. Residues 150–152 (KDQ) are interaction with tRNA. Catalysis depends on cysteine 200, which acts as the Cysteine persulfide intermediate.

This sequence belongs to the MnmA/TRMU family.

The protein localises to the cytoplasm. The enzyme catalyses S-sulfanyl-L-cysteinyl-[protein] + uridine(34) in tRNA + AH2 + ATP = 2-thiouridine(34) in tRNA + L-cysteinyl-[protein] + A + AMP + diphosphate + H(+). Catalyzes the 2-thiolation of uridine at the wobble position (U34) of tRNA, leading to the formation of s(2)U34. This chain is tRNA-specific 2-thiouridylase MnmA, found in Coxiella burnetii (strain Dugway 5J108-111).